Here is a 118-residue protein sequence, read N- to C-terminus: Large ribosomal subunit protein uL22 (118 aa).

The protein belongs to the universal ribosomal protein uL22 family. In terms of assembly, part of the 50S ribosomal subunit.

Functionally, this protein binds specifically to 23S rRNA; its binding is stimulated by other ribosomal proteins, e.g. L4, L17, and L20. It is important during the early stages of 50S assembly. It makes multiple contacts with different domains of the 23S rRNA in the assembled 50S subunit and ribosome. The globular domain of the protein is located near the polypeptide exit tunnel on the outside of the subunit, while an extended beta-hairpin is found that lines the wall of the exit tunnel in the center of the 70S ribosome. This chain is Large ribosomal subunit protein uL22, found in Leuconostoc mesenteroides subsp. mesenteroides (strain ATCC 8293 / DSM 20343 / BCRC 11652 / CCM 1803 / JCM 6124 / NCDO 523 / NBRC 100496 / NCIMB 8023 / NCTC 12954 / NRRL B-1118 / 37Y).